The primary structure comprises 95 residues: Protein ECS1 (95 aa).

The N-terminal stretch at 1–27 (MASSIVSSMFLFLLLLLVFPHIDNVLG) is a signal peptide.

As to expression, expressed in leaves, flowers and stems, but not in roots.

The protein localises to the secreted. It localises to the cell wall. In terms of biological role, maybe involved in defense responses to X.campestris, but probably not a X.campestris pv. campestris race 750 (e.g. Xcc750) resistance gene; according to genetic data, linked to a locus influencing resistance to Xcc750. The protein is Protein ECS1 of Arabidopsis thaliana (Mouse-ear cress).